The following is a 294-amino-acid chain: Acetyl-coenzyme A carboxylase carboxyl transferase subunit beta (294 aa).

The CoA carboxyltransferase N-terminal domain maps to 30 to 294 (IMTKCPECKK…PGVGGEVDGE (265 aa)). Positions 34, 37, 53, and 56 each coordinate Zn(2+). Residues 34 to 56 (CPECKKIMYTKELQKNLMVCNYC) form a C4-type zinc finger.

This sequence belongs to the AccD/PCCB family. Acetyl-CoA carboxylase is a heterohexamer composed of biotin carboxyl carrier protein (AccB), biotin carboxylase (AccC) and two subunits each of ACCase subunit alpha (AccA) and ACCase subunit beta (AccD). Zn(2+) serves as cofactor.

It localises to the cytoplasm. The enzyme catalyses N(6)-carboxybiotinyl-L-lysyl-[protein] + acetyl-CoA = N(6)-biotinyl-L-lysyl-[protein] + malonyl-CoA. Its pathway is lipid metabolism; malonyl-CoA biosynthesis; malonyl-CoA from acetyl-CoA: step 1/1. Its function is as follows. Component of the acetyl coenzyme A carboxylase (ACC) complex. Biotin carboxylase (BC) catalyzes the carboxylation of biotin on its carrier protein (BCCP) and then the CO(2) group is transferred by the transcarboxylase to acetyl-CoA to form malonyl-CoA. The protein is Acetyl-coenzyme A carboxylase carboxyl transferase subunit beta of Listeria monocytogenes serovar 1/2a (strain ATCC BAA-679 / EGD-e).